A 98-amino-acid chain; its full sequence is NADH-ubiquinone oxidoreductase chain 4L (98 aa).

3 consecutive transmembrane segments (helical) span residues 1-21 (MTPTYMNIMLAFTISLLGMLI), 29-49 (SLLCLEGMMMSLFIMTTLIAL), and 61-81 (IILLVFAACEAAVGLALLVSI).

This sequence belongs to the complex I subunit 4L family. As to quaternary structure, core subunit of respiratory chain NADH dehydrogenase (Complex I) which is composed of 45 different subunits.

Its subcellular location is the mitochondrion inner membrane. The enzyme catalyses a ubiquinone + NADH + 5 H(+)(in) = a ubiquinol + NAD(+) + 4 H(+)(out). In terms of biological role, core subunit of the mitochondrial membrane respiratory chain NADH dehydrogenase (Complex I) which catalyzes electron transfer from NADH through the respiratory chain, using ubiquinone as an electron acceptor. Part of the enzyme membrane arm which is embedded in the lipid bilayer and involved in proton translocation. This Macaca maura (Moor macaque) protein is NADH-ubiquinone oxidoreductase chain 4L (MT-ND4L).